A 427-amino-acid chain; its full sequence is Serine hydroxymethyltransferase (427 aa).

Residues Leu-118 and 122-124 (GHL) each bind (6S)-5,6,7,8-tetrahydrofolate. Position 227 is an N6-(pyridoxal phosphate)lysine (Lys-227). Residues Glu-243 and 351 to 353 (SPF) each bind (6S)-5,6,7,8-tetrahydrofolate.

This sequence belongs to the SHMT family. Homodimer. Requires pyridoxal 5'-phosphate as cofactor.

It localises to the cytoplasm. The enzyme catalyses (6R)-5,10-methylene-5,6,7,8-tetrahydrofolate + glycine + H2O = (6S)-5,6,7,8-tetrahydrofolate + L-serine. It participates in one-carbon metabolism; tetrahydrofolate interconversion. It functions in the pathway amino-acid biosynthesis; glycine biosynthesis; glycine from L-serine: step 1/1. In terms of biological role, catalyzes the reversible interconversion of serine and glycine with tetrahydrofolate (THF) serving as the one-carbon carrier. This reaction serves as the major source of one-carbon groups required for the biosynthesis of purines, thymidylate, methionine, and other important biomolecules. Also exhibits THF-independent aldolase activity toward beta-hydroxyamino acids, producing glycine and aldehydes, via a retro-aldol mechanism. The sequence is that of Serine hydroxymethyltransferase from Thermotoga neapolitana (strain ATCC 49049 / DSM 4359 / NBRC 107923 / NS-E).